The primary structure comprises 247 residues: Killer cell lectin-like receptor subfamily I member 2 (247 aa).

Basic and acidic residues predominate over residues 1–12; that stretch reads MPRKKQNERGTN. The segment at 1 to 39 is disordered; that stretch reads MPRKKQNERGTNKQEIINIETKSSTFQEKQRQSKTDQIS. The Cytoplasmic portion of the chain corresponds to 1 to 79; the sequence is MPRKKQNERG…GTDPWLTTWR (79 aa). The chain crosses the membrane as a helical span at residues 80 to 100; sequence IITVILGTSCIILVTKVGFLI. The Extracellular portion of the chain corresponds to 101–247; sequence PNLFSRGEKR…KAYTCEFNLQ (147 aa). N125, N196, N212, and N218 each carry an N-linked (GlcNAc...) asparagine glycan. In terms of domain architecture, C-type lectin spans 139–243; sequence FGNNFYLFFR…CSSKKAYTCE (105 aa). Intrachain disulfides connect C160–C242 and C221–C234.

In terms of assembly, heterodimer with KLRE1. Expressed in natural killer (NK) cells.

Its subcellular location is the cell membrane. Its function is as follows. Lectin-like receptor for natural killer (NK) cells. Heterodimer formation with KLRE1 mediates NK cell cytolytic activity. In Rattus norvegicus (Rat), this protein is Killer cell lectin-like receptor subfamily I member 2.